Reading from the N-terminus, the 38-residue chain is Mu-agatoxin-Hc1b (38 aa).

Disulfide bonds link Cys3/Cys19, Cys10/Cys24, Cys18/Cys34, and Cys26/Cys32. The residue at position 38 (Ser38) is a Serine amide.

The protein belongs to the neurotoxin 07 (Beta/delta-agtx) family. 02 (aga-3) subfamily. Expressed by the venom gland.

The protein localises to the secreted. Functionally, insecticidal neurotoxin that induces irreversible neuromuscular blockade in house crickets (A.domesticus). Modifies presynaptic voltage-gated sodium channels (Nav), causing them to open at the normal resting potential of the nerve. This leads to spontaneous release of neurotransmitter and repetitive action potentials in motor neurons. This Hololena curta (Funnel-web spider) protein is Mu-agatoxin-Hc1b.